A 454-amino-acid polypeptide reads, in one-letter code: CCA-adding enzyme (454 aa).

2 residues coordinate ATP: S59 and R62. 2 residues coordinate CTP: S59 and R62. Residues D71, D73, and D125 each contribute to the Mg(2+) site. The ATP site is built by H148, K167, and Y176. The CTP site is built by H148, K167, and Y176.

It belongs to the tRNA nucleotidyltransferase/poly(A) polymerase family. Archaeal CCA-adding enzyme subfamily. As to quaternary structure, homodimer. Mg(2+) is required as a cofactor.

The enzyme catalyses a tRNA precursor + 2 CTP + ATP = a tRNA with a 3' CCA end + 3 diphosphate. It carries out the reaction a tRNA with a 3' CCA end + 2 CTP + ATP = a tRNA with a 3' CCACCA end + 3 diphosphate. Functionally, catalyzes the addition and repair of the essential 3'-terminal CCA sequence in tRNAs without using a nucleic acid template. Adds these three nucleotides in the order of C, C, and A to the tRNA nucleotide-73, using CTP and ATP as substrates and producing inorganic pyrophosphate. tRNA 3'-terminal CCA addition is required both for tRNA processing and repair. Also involved in tRNA surveillance by mediating tandem CCA addition to generate a CCACCA at the 3' terminus of unstable tRNAs. While stable tRNAs receive only 3'-terminal CCA, unstable tRNAs are marked with CCACCA and rapidly degraded. This is CCA-adding enzyme from Methanosarcina barkeri (strain Fusaro / DSM 804).